Here is a 423-residue protein sequence, read N- to C-terminus: Protein disulfide isomerase-like 5-2 (423 aa).

A signal peptide spans 1-35 (MAATTTRPLPLLLLLLLPPLLLLLLSFHAAAAAAA). One can recognise a Thioredoxin domain in the interval 36-149 (EEFPRDGRVI…LVRNLNKFVA (114 aa)). Residues C71 and C74 each act as nucleophile in the active site. The cysteines at positions 71 and 74 are disulfide-linked. N181 carries N-linked (GlcNAc...) asparagine glycosylation. The helical transmembrane segment at 386 to 406 (LVSLNSLYILICVFALLGVMI) threads the bilayer.

It belongs to the protein disulfide isomerase family.

The protein resides in the membrane. Acts as a protein-folding catalyst that interacts with nascent polypeptides to catalyze the formation, isomerization, and reduction or oxidation of disulfide bonds. May play a role in storage protein biogenesis. In Oryza sativa subsp. japonica (Rice), this protein is Protein disulfide isomerase-like 5-2 (PDIL5-2).